A 379-amino-acid polypeptide reads, in one-letter code: Odorant receptor 33b (379 aa).

Over 1–37 (MDLKPRVIRSEDIYRTYWLYWHLLGLESNFFLNRLLD) the chain is Cytoplasmic. The helical transmembrane segment at 38 to 58 (LVITIFVTIWYPIHLILGLFM) threads the bilayer. At 59–64 (ERSLGD) the chain is on the extracellular side. Residues 65–85 (VCKGLPITAACFFASFKFICF) traverse the membrane as a helical segment. At 86-129 (RFKLSEIKEIEILFKELDQRALSREECEFFNQNTRREANFIWKS) the chain is on the cytoplasmic side. The chain crosses the membrane as a helical span at residues 130 to 150 (FIVAYGLSNISAIASVLFGGG). Over 151–165 (HKLLYPAWFPYDVQA) the chain is Extracellular. The chain crosses the membrane as a helical span at residues 166–186 (TELIFWLSVTYQIAGVSLAIL). The Cytoplasmic segment spans residues 187–256 (QNLANDSYPP…LLRSTMNISQ (70 aa)). A helical membrane pass occupies residues 257–277 (LGQFISSGVNISITLVNILFF). Residues 278 to 281 (ADNN) lie on the Extracellular side of the membrane. The chain crosses the membrane as a helical span at residues 282–302 (FAITYYGVYFLSMVLELFPCC). The Cytoplasmic segment spans residues 303-355 (YYGTLISVEMNQLTYAIYSSNWMSMNRSYSRILLIFMQLTLAEVQIKAGGMIG). The helical transmembrane segment at 356–376 (IGMNAFFATVRLAYSFFTLAM) threads the bilayer. Residues 377-379 (SLR) are Extracellular-facing.

It belongs to the insect chemoreceptor superfamily. Heteromeric odorant receptor channel (TC 1.A.69) family. Or2a subfamily. Interacts with Orco. Complexes exist early in the endomembrane system in olfactory sensory neurons (OSNs), coupling these complexes to the conserved ciliary trafficking pathway. In terms of tissue distribution, expressed in 15 cells in the antenna but not the maxillary palp.

Its subcellular location is the cell membrane. Odorant receptor which mediates acceptance or avoidance behavior, depending on its substrates. The odorant receptor repertoire encodes a large collection of odor stimuli that vary widely in identity, intensity, and duration. May form a complex with Orco to form odorant-sensing units, providing sensitive and prolonged odorant signaling and calcium permeability. Involved in the behavioral responses to pentyl acetate and pyrazines. This is Odorant receptor 33b (Or33b) from Drosophila melanogaster (Fruit fly).